Consider the following 296-residue polypeptide: Xyloglucan endotransglucosylase/hydrolase 1 (296 aa).

Positions 1-23 (MGSSSSMWTVCVILASLASAALC) are cleaved as a signal peptide. The GH16 domain maps to 24–222 (ANPRRPVDVQ…WSKAPFIAAY (199 aa)). The active-site Nucleophile is the glutamate 108. Catalysis depends on glutamate 112, which acts as the Proton donor. Glutamate 112 is a binding site for xyloglucan. Asparagine 116 is a glycosylation site (N-linked (GlcNAc...) asparagine). Xyloglucan is bound by residues 125–127 (QTN), 135–137 (DRE), 201–202 (DW), and glycine 206. 2 cysteine pairs are disulfide-bonded: cysteine 230-cysteine 239 and cysteine 276-cysteine 290. Arginine 281 contributes to the xyloglucan binding site.

This sequence belongs to the glycosyl hydrolase 16 family. XTH group 1 subfamily. In terms of processing, contains at least one intrachain disulfide bond essential for its enzymatic activity. Post-translationally, N-glycosylated; not essential for its enzymatic activity.

The protein localises to the secreted. Its subcellular location is the cell wall. It is found in the extracellular space. It localises to the apoplast. The enzyme catalyses breaks a beta-(1-&gt;4) bond in the backbone of a xyloglucan and transfers the xyloglucanyl segment on to O-4 of the non-reducing terminal glucose residue of an acceptor, which can be a xyloglucan or an oligosaccharide of xyloglucan.. Functionally, catalyzes xyloglucan endohydrolysis (XEH) and/or endotransglycosylation (XET). Cleaves and religates xyloglucan polymers, an essential constituent of the primary cell wall, and thereby participates in cell wall construction of growing tissues. The sequence is that of Xyloglucan endotransglucosylase/hydrolase 1 from Glycine max (Soybean).